A 247-amino-acid polypeptide reads, in one-letter code: UPF0309 protein Lm4b_02611 (247 aa).

Residues 31-214 (VAESIENDGV…ETMVNDNFTP (184 aa)) form the SIS domain.

This sequence belongs to the UPF0309 family.

The polypeptide is UPF0309 protein Lm4b_02611 (Listeria monocytogenes serotype 4b (strain CLIP80459)).